Here is a 166-residue protein sequence, read N- to C-terminus: Myeloid-derived growth factor (166 aa).

A signal peptide spans 1–24 (MAAPSGGFWTAVVLAAAALKLAAA).

It belongs to the MYDGF family. As to expression, expressed in prostate, spleen and lung, and weakly expressed in the left ventricle (LF) and liver. Expressed predominantly in inflammatory cells, such as monocytes and macrophages, and weakly expressed in neutrophils, T-cells, B-cells, endothelial cells and cardiac myocytes, after myocardial infarction (MI) (at protein level).

The protein localises to the secreted. The protein resides in the endoplasmic reticulum-Golgi intermediate compartment. It localises to the endoplasmic reticulum. It is found in the golgi apparatus. In terms of biological role, bone marrow-derived monocyte and paracrine-acting protein that promotes cardiac myocyte survival and adaptive angiogenesis for cardiac protection and/or repair after myocardial infarction (MI). Stimulates endothelial cell proliferation through a MAPK1/3-, STAT3- and CCND1-mediated signaling pathway. Inhibits cardiac myocyte apoptosis in a PI3K/AKT-dependent signaling pathway. The protein is Myeloid-derived growth factor of Mus musculus (Mouse).